Consider the following 170-residue polypeptide: MQKTIRIIGIDPGLRRTGWGVIDTLGNSLRFVASGTVTSDGDMDLASRLCQLHDGLAEIVHSHQPDEAAVEQTFVNKDAVATLKLGQARGIAMLVPARAGLPVFEYAPNAVKKAVIGVGHGEKQQIHMMLKILMPKAEFKGNDAADALAIAICHAHNRGGDRMRRLLAAG.

Active-site residues include aspartate 11, glutamate 71, and aspartate 143. The Mg(2+) site is built by aspartate 11, glutamate 71, and aspartate 143.

The protein belongs to the RuvC family. Homodimer which binds Holliday junction (HJ) DNA. The HJ becomes 2-fold symmetrical on binding to RuvC with unstacked arms; it has a different conformation from HJ DNA in complex with RuvA. In the full resolvosome a probable DNA-RuvA(4)-RuvB(12)-RuvC(2) complex forms which resolves the HJ. Mg(2+) serves as cofactor.

It is found in the cytoplasm. It catalyses the reaction Endonucleolytic cleavage at a junction such as a reciprocal single-stranded crossover between two homologous DNA duplexes (Holliday junction).. The RuvA-RuvB-RuvC complex processes Holliday junction (HJ) DNA during genetic recombination and DNA repair. Endonuclease that resolves HJ intermediates. Cleaves cruciform DNA by making single-stranded nicks across the HJ at symmetrical positions within the homologous arms, yielding a 5'-phosphate and a 3'-hydroxyl group; requires a central core of homology in the junction. The consensus cleavage sequence is 5'-(A/T)TT(C/G)-3'. Cleavage occurs on the 3'-side of the TT dinucleotide at the point of strand exchange. HJ branch migration catalyzed by RuvA-RuvB allows RuvC to scan DNA until it finds its consensus sequence, where it cleaves and resolves the cruciform DNA. This Agrobacterium fabrum (strain C58 / ATCC 33970) (Agrobacterium tumefaciens (strain C58)) protein is Crossover junction endodeoxyribonuclease RuvC.